Here is a 310-residue protein sequence, read N- to C-terminus: Probable manganese-dependent inorganic pyrophosphatase (310 aa).

Positions 9, 13, 15, 75, 97, and 149 each coordinate Mn(2+).

The protein belongs to the PPase class C family. Mn(2+) serves as cofactor.

The protein localises to the cytoplasm. It carries out the reaction diphosphate + H2O = 2 phosphate + H(+). This chain is Probable manganese-dependent inorganic pyrophosphatase, found in Bacillus cytotoxicus (strain DSM 22905 / CIP 110041 / 391-98 / NVH 391-98).